Consider the following 383-residue polypeptide: Mating-type protein MAT-1 (383 aa).

The alpha box DNA-binding region spans 60–117 (KARKALNAFVGFRCYYVTIPMFKSWPMKKLSNLIGLLWEADPNKSLWSLMAKAWSTIR).

The protein belongs to the MATALPHA1 family.

Its subcellular location is the nucleus. In terms of biological role, mating type proteins are sequence specific DNA-binding proteins that act as master switches in fungal differentiation by controlling gene expression in a cell type-specific fashion. Transcriptional activator that induces the transcription of alpha-specific genes. This is Mating-type protein MAT-1 (MAT1) from Cochliobolus heterostrophus (Southern corn leaf blight fungus).